We begin with the raw amino-acid sequence, 133 residues long: UPF0102 protein bll0669 (133 aa).

Belongs to the UPF0102 family.

This Bradyrhizobium diazoefficiens (strain JCM 10833 / BCRC 13528 / IAM 13628 / NBRC 14792 / USDA 110) protein is UPF0102 protein bll0669.